Reading from the N-terminus, the 356-residue chain is Protein RecA (356 aa).

77 to 84 (GPESSGKT) serves as a coordination point for ATP.

Belongs to the RecA family.

Its subcellular location is the cytoplasm. Can catalyze the hydrolysis of ATP in the presence of single-stranded DNA, the ATP-dependent uptake of single-stranded DNA by duplex DNA, and the ATP-dependent hybridization of homologous single-stranded DNAs. It interacts with LexA causing its activation and leading to its autocatalytic cleavage. This is Protein RecA from Caulobacter sp. (strain K31).